The following is a 231-amino-acid chain: Protein fmp52-2, mitochondrial (231 aa).

A mitochondrion-targeting transit peptide spans 1–46 (MTMTTAAVFGCTGAVGSQILATLLAIDTFPSVKTISRRLPNVQSPK).

This sequence belongs to the FMP52 family.

The protein localises to the mitochondrion outer membrane. In Neosartorya fischeri (strain ATCC 1020 / DSM 3700 / CBS 544.65 / FGSC A1164 / JCM 1740 / NRRL 181 / WB 181) (Aspergillus fischerianus), this protein is Protein fmp52-2, mitochondrial (fmp522).